Here is a 223-residue protein sequence, read N- to C-terminus: Small ribosomal subunit protein uS3 (223 aa).

In terms of domain architecture, KH type-2 spans 38-106; it reads IRKFLDEKLK…QVHINIVEIK (69 aa).

It belongs to the universal ribosomal protein uS3 family. In terms of assembly, part of the 30S ribosomal subunit. Forms a tight complex with proteins S10 and S14.

Functionally, binds the lower part of the 30S subunit head. Binds mRNA in the 70S ribosome, positioning it for translation. The polypeptide is Small ribosomal subunit protein uS3 (Lactobacillus delbrueckii subsp. bulgaricus (strain ATCC 11842 / DSM 20081 / BCRC 10696 / JCM 1002 / NBRC 13953 / NCIMB 11778 / NCTC 12712 / WDCM 00102 / Lb 14)).